The primary structure comprises 248 residues: Probable transcriptional regulatory protein Acel_1346 (248 aa).

The protein belongs to the TACO1 family.

It localises to the cytoplasm. This Acidothermus cellulolyticus (strain ATCC 43068 / DSM 8971 / 11B) protein is Probable transcriptional regulatory protein Acel_1346.